The primary structure comprises 124 residues: Small ribosomal subunit protein uS12 (124 aa).

A 3-methylthioaspartic acid modification is found at Asp-89. The tract at residues 104–124 is disordered; the sequence is SAGVQNRNRGRSKYGTKRPKK. A compositionally biased stretch (basic residues) spans 111-124; sequence NRGRSKYGTKRPKK.

The protein belongs to the universal ribosomal protein uS12 family. Part of the 30S ribosomal subunit. Contacts proteins S8 and S17. May interact with IF1 in the 30S initiation complex.

With S4 and S5 plays an important role in translational accuracy. In terms of biological role, interacts with and stabilizes bases of the 16S rRNA that are involved in tRNA selection in the A site and with the mRNA backbone. Located at the interface of the 30S and 50S subunits, it traverses the body of the 30S subunit contacting proteins on the other side and probably holding the rRNA structure together. The combined cluster of proteins S8, S12 and S17 appears to hold together the shoulder and platform of the 30S subunit. In Pelotomaculum thermopropionicum (strain DSM 13744 / JCM 10971 / SI), this protein is Small ribosomal subunit protein uS12.